The following is a 435-amino-acid chain: Ornithine decarboxylase (435 aa).

Lys76 bears the N6-(pyridoxal phosphate)lysine mark. Pyridoxal 5'-phosphate contacts are provided by residues Ser207, Gly244, and 283 to 286 (EPGR). 339–340 (FD) contacts substrate. The Proton donor; shared with dimeric partner role is filled by Cys368. A substrate-binding site is contributed by Asp369. A pyridoxal 5'-phosphate-binding site is contributed by Tyr397.

Belongs to the Orn/Lys/Arg decarboxylase class-II family. Homodimer. Only the dimer is catalytically active, as the active sites are constructed of residues from both monomers. Pyridoxal 5'-phosphate is required as a cofactor.

The enzyme catalyses L-ornithine + H(+) = putrescine + CO2. It functions in the pathway amine and polyamine biosynthesis; putrescine biosynthesis via L-ornithine pathway; putrescine from L-ornithine: step 1/1. With respect to regulation, inhibited by antizyme (AZ) in response to polyamine levels. AZ inhibits the assembly of the functional homodimer by binding to ODC monomers and targeting them for ubiquitin-independent proteolytic destruction by the 26S proteasome. Its function is as follows. Catalyzes the first and rate-limiting step of polyamine biosynthesis that converts ornithine into putrescine, which is the precursor for the polyamines, spermidine and spermine. Polyamines are essential for cell proliferation and are implicated in cellular processes, ranging from DNA replication to apoptosis. In Panagrellus redivivus (Microworm), this protein is Ornithine decarboxylase (ODC).